Consider the following 315-residue polypeptide: Glycine--tRNA ligase alpha subunit (315 aa).

The protein belongs to the class-II aminoacyl-tRNA synthetase family. In terms of assembly, tetramer of two alpha and two beta subunits.

Its subcellular location is the cytoplasm. It catalyses the reaction tRNA(Gly) + glycine + ATP = glycyl-tRNA(Gly) + AMP + diphosphate. The chain is Glycine--tRNA ligase alpha subunit from Pseudomonas aeruginosa (strain LESB58).